Here is a 216-residue protein sequence, read N- to C-terminus: PEP-dependent dihydroxyacetone kinase 2, ADP-binding subunit DhaL (216 aa).

Positions 9–210 (AFFGHVLQDM…SWMLMNVILE (202 aa)) constitute a DhaL domain. Positions 33, 38, and 40 each coordinate Mg(2+). ADP contacts are provided by residues 41-44 (HGIN), 84-85 (AS), Gly-126, Met-135, Arg-182, and 195-197 (DPG).

As to quaternary structure, homodimer. The dihydroxyacetone kinase complex is composed of a homodimer of DhaM, a homodimer of DhaK and the subunit DhaL. Mg(2+) is required as a cofactor.

It localises to the cytoplasm. It catalyses the reaction dihydroxyacetone + phosphoenolpyruvate = dihydroxyacetone phosphate + pyruvate. Its pathway is polyol metabolism; glycerol degradation. In terms of biological role, ADP-binding subunit of the dihydroxyacetone kinase, which is responsible for the phosphoenolpyruvate (PEP)-dependent phosphorylation of dihydroxyacetone. DhaL-ADP is converted to DhaL-ATP via a phosphoryl group transfer from DhaM and transmits it to dihydroxyacetone binds to DhaK. The protein is PEP-dependent dihydroxyacetone kinase 2, ADP-binding subunit DhaL of Listeria innocua serovar 6a (strain ATCC BAA-680 / CLIP 11262).